Consider the following 736-residue polypeptide: Neprilysin-2 (736 aa).

Residues Met1–Arg19 are Cytoplasmic-facing. The helical; Signal-anchor for type II membrane protein transmembrane segment at Ile20–Ile40 threads the bilayer. Residues Tyr41–Trp736 are Extracellular-facing. A Peptidase M13 domain is found at Val52–Trp736. 5 disulfide bridges follow: Cys53-Cys58, Cys76-Cys721, Cys84-Cys681, Cys142-Cys399, and Cys608-Cys733. The stretch at Phe103 to Glu123 forms a coiled coil. His571 serves as a coordination point for Zn(2+). Glu572 is an active-site residue. Zn(2+) contacts are provided by His575 and Glu633. The active-site Proton donor is the Asp637.

The protein belongs to the peptidase M13 family. It depends on Zn(2+) as a cofactor. Expressed in muscle cells, GLR cells, SMB motor neurons and AIM interneurons.

It localises to the membrane. In terms of biological role, required for olfactory plasticity, which is the change from positive chemotaxis to dispersal after prolonged exposure to an odorant. Thought to antagonise snet-1 by degrading excess snet-1 peptides and thus enabling olfactory plasticity. In Caenorhabditis elegans, this protein is Neprilysin-2.